The chain runs to 256 residues: Thiazole synthase (256 aa).

Lysine 98 (schiff-base intermediate with DXP) is an active-site residue. Residues glycine 159, alanine 185–glycine 186, and asparagine 207–threonine 208 contribute to the 1-deoxy-D-xylulose 5-phosphate site.

Belongs to the ThiG family. In terms of assembly, homotetramer. Forms heterodimers with either ThiH or ThiS.

It localises to the cytoplasm. The enzyme catalyses [ThiS sulfur-carrier protein]-C-terminal-Gly-aminoethanethioate + 2-iminoacetate + 1-deoxy-D-xylulose 5-phosphate = [ThiS sulfur-carrier protein]-C-terminal Gly-Gly + 2-[(2R,5Z)-2-carboxy-4-methylthiazol-5(2H)-ylidene]ethyl phosphate + 2 H2O + H(+). Its pathway is cofactor biosynthesis; thiamine diphosphate biosynthesis. Its function is as follows. Catalyzes the rearrangement of 1-deoxy-D-xylulose 5-phosphate (DXP) to produce the thiazole phosphate moiety of thiamine. Sulfur is provided by the thiocarboxylate moiety of the carrier protein ThiS. In vitro, sulfur can be provided by H(2)S. The sequence is that of Thiazole synthase from Aliivibrio fischeri (strain MJ11) (Vibrio fischeri).